A 517-amino-acid polypeptide reads, in one-letter code: Tyrosine-protein kinase Src42A (517 aa).

The disordered stretch occupies residues 1–47; that stretch reads MGNCLTTQKGEPDKPADRIKLDDPPTIGVGVGVPQIPMPSHAGQPPE. Residues 10 to 23 show a composition bias toward basic and acidic residues; it reads GEPDKPADRIKLDD. An SH3 domain is found at 63 to 124; it reads ANAKIFVALY…PSNYVAKLKS (62 aa). The region spanning 130 to 222 is the SH2 domain; sequence WYFRKIKRIE…GLCVNLCKPC (93 aa). A Protein kinase domain is found at 248 to 504; the sequence is LKFVRKLGSG…TLQWKLEDFY (257 aa). ATP-binding positions include 254 to 262 and K276; that span reads LGSGQFGDV. The active-site Proton acceptor is the D370.

This sequence belongs to the protein kinase superfamily. Tyr protein kinase family. SRC subfamily. In terms of tissue distribution, ubiquitous in early embryos, in stages 13-16 expression is seen in visceral mesoderm, hindgut, brain, anal pads and ventral ganglions. In larvae, expression is in CNS, wing disk, leg disk and photoreceptor precursors in the eye-antenna disks posterior to the morphogenetic furrow.

The catalysed reaction is L-tyrosyl-[protein] + ATP = O-phospho-L-tyrosyl-[protein] + ADP + H(+). In terms of biological role, required directly or indirectly for the phosphorylation of drpr which is necessary for the interaction of drpr with shark and subsequent glial phagocytic activity. Together with drpr and shark, promotes the migration of macrophages to sites of wounding as part of a signaling cascade where Src42A detects production of hydrogen peroxide at wound sites which triggers phosphorylation of drpr and subsequent recruitment and activation of shark. Essential for correct eye morphogenesis (ommatidial R7 neuron formation) which requires the Ras1/MAPK signal transduction pathway. May be involved in the regulation of cytoskeleton organization and cell-cell contacts in developing ommatidia. Involved in phosphorylation of Dscam1, a cell surface receptor involved in targeting of growing axons during eye morphogenesis, and its interaction partner the SH2/SH3 adapter protein dock/dreadlocks. During embryogenesis, involved in regulation of dorsal closure where it may have a role in activating the JNK pathway in leading edge cells during this process. This is Tyrosine-protein kinase Src42A from Drosophila melanogaster (Fruit fly).